A 672-amino-acid polypeptide reads, in one-letter code: uncharacterized protein (672 aa).

Over residues 1-10 the composition is skewed to basic and acidic residues; the sequence is MAKSDGDDPL. The interval 1–40 is disordered; that stretch reads MAKSDGDDPLRPASPRLRSSRRHSLRYSAYTGGPDPLAPP.

This is an uncharacterized protein from Mycobacterium tuberculosis (strain CDC 1551 / Oshkosh).